The sequence spans 541 residues: Calcium/calmodulin-dependent protein kinase kinase (541 aa).

The interval 83 to 106 (AVQEDDEAGPHSSNNLAATMSPNL) is disordered. Residues 93-106 (HSSNNLAATMSPNL) show a composition bias toward polar residues. A Protein kinase domain is found at 130–411 (YRLMEEIGQG…LHEVKVHTWV (282 aa)). ATP contacts are provided by residues 136 to 144 (IGQGSYGIV) and lysine 159. The tract at residues 169–190 (NFACFRQPPPRRNKENAAPSVL) is RP domain. The active-site Proton acceptor is the aspartate 276. The autoinhibitory domain stretch occupies residues 437–442 (ENCVRV). Positions 440–465 (VRVIPRLDTLILVKAMGHRKRFGNPF) are calmodulin-binding. The disordered stretch occupies residues 462-512 (GNPFRNKLSAQSSIRDRRKSSSVKDPTYVPPPNSPPATSNNNLNSTKVDRP). Positions 497–507 (PATSNNNLNST) are enriched in low complexity.

The protein belongs to the protein kinase superfamily. Ser/Thr protein kinase family. Requires Mg(2+) as cofactor. Expressed in head and tail neurons and vulval muscles.

Its subcellular location is the cytoplasm. It carries out the reaction L-seryl-[protein] + ATP = O-phospho-L-seryl-[protein] + ADP + H(+). It catalyses the reaction L-threonyl-[protein] + ATP = O-phospho-L-threonyl-[protein] + ADP + H(+). Activated by Ca(2+)/calmodulin. Binding of calmodulin may relieve intrasteric autoinhibition. Functionally, calcium/calmodulin-dependent protein kinase which phosphorylates cmk-1. Component of a calcium-triggered signaling cascade involved in CRE-mediated transcriptional activation, probably through cmk-1-mediated crh-1/CREB phosphorylation. Plays a role in salt-avoidance learning behavior via the phosphorylation of cmk-1. The chain is Calcium/calmodulin-dependent protein kinase kinase from Caenorhabditis elegans.